Reading from the N-terminus, the 866-residue chain is DNA replication licensing factor MCM4 (866 aa).

Disordered stretches follow at residues 1–67, 81–107, and 124–145; these read MSSP…TSPA, SPLN…TPLR, and GGGS…PVSE. Composition is skewed to polar residues over residues 47–63 and 81–93; these read DNIS…SLPA and SPLN…SMGS. Phosphoserine is present on residues serine 55 and serine 81. Threonine 87 is subject to Phosphothreonine. In terms of domain architecture, MCM spans 460–669; that stretch reads IYDRLARAIA…FDKRLASHLV (210 aa). 512–519 contributes to the ATP binding site; the sequence is GDPGTSKS. An Arginine finger motif is present at residues 644–647; sequence SRFD.

It belongs to the MCM family. In terms of assembly, component of the Mcm2-7 complex. The complex forms a toroidal hexameric ring with the proposed subunit order Mcm2-Mcm6-Mcm4-Mcm7-Mcm3-Mcm5. Post-translationally, phosphorylated by the catalytic component of the Dbf4-dependent kinase (DDK) complex Cdc7.

The protein resides in the nucleus. The catalysed reaction is ATP + H2O = ADP + phosphate + H(+). Its function is as follows. Acts as a component of the Mcm2-7 complex (Mcm complex) which is the putative replicative helicase essential for 'once per cell cycle' DNA replication initiation and elongation in eukaryotic cells. The active ATPase sites in the Mcm2-7 ring are formed through the interaction surfaces of two neighboring subunits such that a critical structure of a conserved arginine finger motif is provided in trans relative to the ATP-binding site of the Walker A box of the adjacent subunit. The six ATPase active sites, however, are likely to contribute differentially to the complex helicase activity. Required for DNA replication and cell proliferation. Essential role in mitotic DNA replication but not in endoreplication. The protein is DNA replication licensing factor MCM4 (dpa) of Drosophila melanogaster (Fruit fly).